The following is a 123-amino-acid chain: Immunoglobulin lambda variable 5-37 (123 aa).

The N-terminal stretch at 1–19 (MAWTPLLLLLLSHCTGSLS) is a signal peptide. Positions 20-44 (QPVLTQPPSSSASPGESARLTCTLP) are framework-1. An Ig-like domain is found at 21 to 123 (PVLTQPPSSS…YCMIWPSNAS (103 aa)). A disulfide bridge connects residues C41 and C115. A complementarity-determining-1 region spans residues 45-53 (SDINVGSYN). The tract at residues 54–70 (IYWYQQKPGSPPRYLLY) is framework-2. The interval 71–77 (YYSDSDK) is complementarity-determining-2. Residues 78–115 (GQGSGVPSRFSGSKDASANTGILLISGLQSEDEADYYC) form a framework-3 region. Residues 116-123 (MIWPSNAS) are complementarity-determining-3.

In terms of assembly, immunoglobulins are composed of two identical heavy chains and two identical light chains; disulfide-linked.

The protein resides in the secreted. It localises to the cell membrane. V region of the variable domain of immunoglobulin light chains that participates in the antigen recognition. Immunoglobulins, also known as antibodies, are membrane-bound or secreted glycoproteins produced by B lymphocytes. In the recognition phase of humoral immunity, the membrane-bound immunoglobulins serve as receptors which, upon binding of a specific antigen, trigger the clonal expansion and differentiation of B lymphocytes into immunoglobulins-secreting plasma cells. Secreted immunoglobulins mediate the effector phase of humoral immunity, which results in the elimination of bound antigens. The antigen binding site is formed by the variable domain of one heavy chain, together with that of its associated light chain. Thus, each immunoglobulin has two antigen binding sites with remarkable affinity for a particular antigen. The variable domains are assembled by a process called V-(D)-J rearrangement and can then be subjected to somatic hypermutations which, after exposure to antigen and selection, allow affinity maturation for a particular antigen. This Homo sapiens (Human) protein is Immunoglobulin lambda variable 5-37.